The following is a 370-amino-acid chain: MNPVQQPAQHKCPASSLNPPHPKRAQEAPDMGLYCDNFMYQQHNLHPSHRATNFSIGDFTHQANPYLWLGGPGVNNSPSYSPTPAPYIPPAFSAPQRQFLANSAAFGGADLGWMSAASQEELLKRVRPPYSYSALIAMSIQNATDKRLTLSQIYQYVAENFPFYKKSKAGWQNSIRHNLSLNDCFKKMPRDENDPGKGNYWTLDSNCEKMFDNGNFRRKRKPKSETNNIKIAKREEDHVSPKGKESPPMITPSSPKELSPTGHSKCPSPPTVTYTPCLTNFIGSMTAVDSATMNRQGPLGLLNELSQRNLNGLSSFISGSAVDQSPEHQDSSLFYNRSPYYSSLPTSNQKQPPYLQQLHPQQSPLYQGRY.

Disordered stretches follow at residues Met1–Ala28, Asp212–Pro269, and Ser342–Tyr370. The fork-head DNA-binding region spans Arg127–Lys221. Over residues Ala232–Glu245 the composition is skewed to basic and acidic residues. The span at Gln349–Tyr370 shows a compositional bias: low complexity.

As to expression, initially localized to the animal hemisphere (the presumptive ectoderm) of early-mid blastula embryos. Becomes restricted to head placodes, excluding the otic placodes, by the tailbud stages.

The protein resides in the nucleus. Functionally, transcription factor. Essential for ventral specification of the early cephalic (head) ectoderm during gastrulation, playing a role in the non-neural versus neural cell fate choice. Binds to DNA via the target sequence 5'-[AG]TAAA[CT]A-3', with 5'-ATAAACA-3' being the preferred binding site. The protein is Forkhead box protein I1-A (foxi1-a) of Xenopus laevis (African clawed frog).